The chain runs to 224 residues: UPF0758 protein PFL_6051 (224 aa).

The MPN domain maps to 102–224 (ALENPLVVRD…PLSMAEYGWI (123 aa)). Residues His-173, His-175, and Asp-186 each coordinate Zn(2+). The JAMM motif motif lies at 173–186 (HNHPSGICEPSPAD).

Belongs to the UPF0758 family.

The sequence is that of UPF0758 protein PFL_6051 from Pseudomonas fluorescens (strain ATCC BAA-477 / NRRL B-23932 / Pf-5).